The following is a 572-amino-acid chain: Proline--tRNA ligase (572 aa).

This sequence belongs to the class-II aminoacyl-tRNA synthetase family. ProS type 1 subfamily. As to quaternary structure, homodimer.

It localises to the cytoplasm. It carries out the reaction tRNA(Pro) + L-proline + ATP = L-prolyl-tRNA(Pro) + AMP + diphosphate. Catalyzes the attachment of proline to tRNA(Pro) in a two-step reaction: proline is first activated by ATP to form Pro-AMP and then transferred to the acceptor end of tRNA(Pro). As ProRS can inadvertently accommodate and process non-cognate amino acids such as alanine and cysteine, to avoid such errors it has two additional distinct editing activities against alanine. One activity is designated as 'pretransfer' editing and involves the tRNA(Pro)-independent hydrolysis of activated Ala-AMP. The other activity is designated 'posttransfer' editing and involves deacylation of mischarged Ala-tRNA(Pro). The misacylated Cys-tRNA(Pro) is not edited by ProRS. This Haemophilus influenzae (strain PittEE) protein is Proline--tRNA ligase.